Reading from the N-terminus, the 352-residue chain is Photosystem II D2 protein 2 (352 aa).

A helical membrane pass occupies residues 40-60 (CAYLALGGWLTGTSFVTSWYT). H117 lines the chlorophyll a pocket. A helical membrane pass occupies residues 124–140 (GFMLRQFEIARLVGVRP). Residues Q129 and N142 each coordinate pheophytin a. A helical membrane pass occupies residues 152 to 165 (VFVSVFLMYPLGQS). H197 contacts chlorophyll a. Residues 207–227 (GALLCAIHGATVENTLFEDSE) form a helical membrane-spanning segment. A plastoquinone is bound by residues H214 and F261. Fe cation is bound at residue H214. H268 is a Fe cation binding site. Residues 278–294 (GLWMSSIGIVGLALNLR) traverse the membrane as a helical segment.

It belongs to the reaction center PufL/M/PsbA/D family. In terms of assembly, PSII is composed of 1 copy each of membrane proteins PsbA, PsbB, PsbC, PsbD, PsbE, PsbF, PsbH, PsbI, PsbJ, PsbK, PsbL, PsbM, PsbT, PsbX, PsbY, PsbZ, Psb30/Ycf12, peripheral proteins PsbO, CyanoQ (PsbQ), PsbU, PsbV and a large number of cofactors. It forms dimeric complexes. The cofactor is The D1/D2 heterodimer binds P680, chlorophylls that are the primary electron donor of PSII, and subsequent electron acceptors. It shares a non-heme iron and each subunit binds pheophytin, quinone, additional chlorophylls, carotenoids and lipids. There is also a Cl(-1) ion associated with D1 and D2, which is required for oxygen evolution. The PSII complex binds additional chlorophylls, carotenoids and specific lipids..

It is found in the cellular thylakoid membrane. It carries out the reaction 2 a plastoquinone + 4 hnu + 2 H2O = 2 a plastoquinol + O2. Photosystem II (PSII) is a light-driven water:plastoquinone oxidoreductase that uses light energy to abstract electrons from H(2)O, generating O(2) and a proton gradient subsequently used for ATP formation. It consists of a core antenna complex that captures photons, and an electron transfer chain that converts photonic excitation into a charge separation. The D1/D2 (PsbA/PsbD) reaction center heterodimer binds P680, the primary electron donor of PSII as well as several subsequent electron acceptors. D2 is needed for assembly of a stable PSII complex. The polypeptide is Photosystem II D2 protein 2 (Synechococcus sp. (strain ATCC 27144 / PCC 6301 / SAUG 1402/1) (Anacystis nidulans)).